The primary structure comprises 119 residues: Large ribosomal subunit protein uL24 (119 aa).

It belongs to the universal ribosomal protein uL24 family. Part of the 50S ribosomal subunit.

One of two assembly initiator proteins, it binds directly to the 5'-end of the 23S rRNA, where it nucleates assembly of the 50S subunit. Its function is as follows. One of the proteins that surrounds the polypeptide exit tunnel on the outside of the subunit. This chain is Large ribosomal subunit protein uL24, found in Sulfurihydrogenibium sp. (strain YO3AOP1).